The following is a 304-amino-acid chain: Recombination-associated protein RdgC (304 aa).

It belongs to the RdgC family.

Its subcellular location is the cytoplasm. It localises to the nucleoid. In terms of biological role, may be involved in recombination. The sequence is that of Recombination-associated protein RdgC from Shewanella putrefaciens (strain CN-32 / ATCC BAA-453).